A 388-amino-acid chain; its full sequence is Succinate--CoA ligase [ADP-forming] subunit beta (388 aa).

An ATP-grasp domain is found at K9–Q244. ATP-binding positions include K46, G53–G55, E99, T102, and E107. Residues N199 and D213 each coordinate Mg(2+). Substrate-binding positions include N264 and G321–V323.

This sequence belongs to the succinate/malate CoA ligase beta subunit family. As to quaternary structure, heterotetramer of two alpha and two beta subunits. Requires Mg(2+) as cofactor.

It carries out the reaction succinate + ATP + CoA = succinyl-CoA + ADP + phosphate. It catalyses the reaction GTP + succinate + CoA = succinyl-CoA + GDP + phosphate. It participates in carbohydrate metabolism; tricarboxylic acid cycle; succinate from succinyl-CoA (ligase route): step 1/1. In terms of biological role, succinyl-CoA synthetase functions in the citric acid cycle (TCA), coupling the hydrolysis of succinyl-CoA to the synthesis of either ATP or GTP and thus represents the only step of substrate-level phosphorylation in the TCA. The beta subunit provides nucleotide specificity of the enzyme and binds the substrate succinate, while the binding sites for coenzyme A and phosphate are found in the alpha subunit. This Shigella flexneri serotype 5b (strain 8401) protein is Succinate--CoA ligase [ADP-forming] subunit beta.